The primary structure comprises 302 residues: Oxygen-dependent coproporphyrinogen-III oxidase (302 aa).

Ser94 lines the substrate pocket. His98 and His108 together coordinate a divalent metal cation. The active-site Proton donor is the His108. Position 110 to 112 (110 to 112) interacts with substrate; that stretch reads NVR. Residues His147 and His177 each contribute to the a divalent metal cation site. Positions 242–277 are important for dimerization; sequence YVEFNLVYDRGTLFGLQTGGRTESILMSMPPLARWE. 260–262 serves as a coordination point for substrate; sequence GGR.

The protein belongs to the aerobic coproporphyrinogen-III oxidase family. In terms of assembly, homodimer. The cofactor is a divalent metal cation.

It localises to the cytoplasm. The catalysed reaction is coproporphyrinogen III + O2 + 2 H(+) = protoporphyrinogen IX + 2 CO2 + 2 H2O. It participates in porphyrin-containing compound metabolism; protoporphyrin-IX biosynthesis; protoporphyrinogen-IX from coproporphyrinogen-III (O2 route): step 1/1. Functionally, involved in the heme biosynthesis. Catalyzes the aerobic oxidative decarboxylation of propionate groups of rings A and B of coproporphyrinogen-III to yield the vinyl groups in protoporphyrinogen-IX. The polypeptide is Oxygen-dependent coproporphyrinogen-III oxidase (Aeromonas hydrophila subsp. hydrophila (strain ATCC 7966 / DSM 30187 / BCRC 13018 / CCUG 14551 / JCM 1027 / KCTC 2358 / NCIMB 9240 / NCTC 8049)).